The chain runs to 367 residues: Histidinol-phosphate aminotransferase (367 aa).

Lys-222 is subject to N6-(pyridoxal phosphate)lysine.

The protein belongs to the class-II pyridoxal-phosphate-dependent aminotransferase family. Histidinol-phosphate aminotransferase subfamily. The cofactor is pyridoxal 5'-phosphate.

It catalyses the reaction L-histidinol phosphate + 2-oxoglutarate = 3-(imidazol-4-yl)-2-oxopropyl phosphate + L-glutamate. It functions in the pathway amino-acid biosynthesis; L-histidine biosynthesis; L-histidine from 5-phospho-alpha-D-ribose 1-diphosphate: step 7/9. This is Histidinol-phosphate aminotransferase from Methanosphaera stadtmanae (strain ATCC 43021 / DSM 3091 / JCM 11832 / MCB-3).